A 309-amino-acid polypeptide reads, in one-letter code: Probable porphobilinogen deaminase (309 aa).

Cys233 carries the post-translational modification S-(dipyrrolylmethanemethyl)cysteine.

Belongs to the HMBS family. It depends on dipyrromethane as a cofactor.

It carries out the reaction 4 porphobilinogen + H2O = hydroxymethylbilane + 4 NH4(+). The protein operates within porphyrin-containing compound metabolism; protoporphyrin-IX biosynthesis; coproporphyrinogen-III from 5-aminolevulinate: step 2/4. Its function is as follows. Tetrapolymerization of the monopyrrole PBG into the hydroxymethylbilane pre-uroporphyrinogen in several discrete steps. The sequence is that of Probable porphobilinogen deaminase from Methanococcoides burtonii (strain DSM 6242 / NBRC 107633 / OCM 468 / ACE-M).